We begin with the raw amino-acid sequence, 223 residues long: MACSGFQSHGAWLELTSRTWPCTALFSLLFIPVFSKGMHVAQPAVVLANSRGVASFVCEYGSAGKAAEVRVTVLRRAGSQMTEVCAATYTVEDELTFLDDSTCTGTSTENKVNLTIQGLRAVDTGLYICKVELLYPPPYYVGMGNGTQIYVIDPEPCPDSDFLLWILAAVSSGLFFYSFLITAVSLSKMLKKRSPLTTGVYVKMPPTEPECEKQFQPYFIPIN.

The N-terminal stretch at 1–35 (MACSGFQSHGAWLELTSRTWPCTALFSLLFIPVFS) is a signal peptide. Topologically, residues 38–161 (MHVAQPAVVL…IDPEPCPDSD (124 aa)) are extracellular. The 102-residue stretch at 39–140 (HVAQPAVVLA…VELLYPPPYY (102 aa)) folds into the Ig-like V-type domain. The interval 46 to 50 (VLANS) is homodimerization. Intrachain disulfides connect cysteine 58-cysteine 129 and cysteine 85-cysteine 103. N-linked (GlcNAc...) asparagine glycosylation occurs at asparagine 113. The interval 134–139 (LYPPPY) is important for interaction with CD80 and CD86. An N-linked (GlcNAc...) asparagine glycan is attached at asparagine 145. The interval 150 to 155 (YVIDPE) is homodimerization. Residues 162–182 (FLLWILAAVSSGLFFYSFLIT) form a helical membrane-spanning segment. Topologically, residues 183-223 (AVSLSKMLKKRSPLTTGVYVKMPPTEPECEKQFQPYFIPIN) are cytoplasmic. At tyrosine 201 the chain carries Phosphotyrosine; by TXK and JAK2.

In terms of assembly, homodimer; disulfide-linked. Binds to CD80/B7-1 and CD86/B7.2. Interacts with ICOSLG. Post-translationally, N-glycosylation is important for dimerization. In terms of processing, phosphorylation at Tyr-201 prevents binding to the AP-2 adapter complex, blocks endocytosis, and leads to retention of CTLA4 on the cell surface.

Its subcellular location is the cell membrane. Inhibitory receptor acting as a major negative regulator of T-cell responses. The affinity of CTLA4 for its natural B7 family ligands, CD80 and CD86, is considerably stronger than the affinity of their cognate stimulatory coreceptor CD28. This is Cytotoxic T-lymphocyte protein 4 (CTLA4) from Sus scrofa (Pig).